Consider the following 395-residue polypeptide: Beta-1,4-galactosyltransferase 3 (395 aa).

Residues 1 to 10 lie on the Cytoplasmic side of the membrane; the sequence is MLRRLLERPC. A helical; Signal-anchor for type II membrane protein transmembrane segment spans residues 11–31; the sequence is TLALLVGSQLAVMMYLSLGGF. Over 32-395 the chain is Lumenal; it reads RSLSALFGRD…ANHTAPHGSH (364 aa). Asparagine 57 is a glycosylation site (N-linked (GlcNAc...) asparagine). Cysteine 79 and cysteine 121 are disulfide-bonded. 132–136 is a UDP-alpha-D-galactose binding site; it reads PHRAR. An N-linked (GlcNAc...) asparagine glycan is attached at asparagine 168. UDP-alpha-D-galactose-binding positions include 171-173, 198-199, tyrosine 228, and tryptophan 260; these read FNR and VD. An intrachain disulfide couples cysteine 192 to cysteine 211. Aspartate 199 is a binding site for Mn(2+). N-acetyl-D-glucosamine is bound at residue 262–265; sequence GEDD. Position 293 (histidine 293) interacts with Mn(2+). 293–295 provides a ligand contact to UDP-alpha-D-galactose; it reads HRG. Arginine 305 contacts N-acetyl-D-glucosamine. Residues asparagine 339 and asparagine 387 are each glycosylated (N-linked (GlcNAc...) asparagine). Residues 341–395 are disordered; that stretch reads TADIGTDPRGPRAPSGPRYPPGSSQAFRQEMLQRRPPARPGPLPTANHTAPHGSH.

The protein belongs to the glycosyltransferase 7 family. The cofactor is Mn(2+).

The protein resides in the golgi apparatus. The protein localises to the golgi stack membrane. The enzyme catalyses an N-acetyl-beta-D-glucosaminyl derivative + UDP-alpha-D-galactose = a beta-D-galactosyl-(1-&gt;4)-N-acetyl-beta-D-glucosaminyl derivative + UDP + H(+). The catalysed reaction is N-acetyl-D-glucosamine + UDP-alpha-D-galactose = beta-D-galactosyl-(1-&gt;4)-N-acetyl-D-glucosamine + UDP + H(+). It catalyses the reaction a beta-D-GlcNAc-(1-&gt;3)-beta-D-Gal-(1-&gt;4)-beta-D-Glc-(1&lt;-&gt;1)-Cer(d18:1(4E)) + UDP-alpha-D-galactose = a neolactoside nLc4Cer(d18:1(4E)) + UDP + H(+). It carries out the reaction a beta-D-glucosylceramide + UDP-alpha-D-galactose = a beta-D-galactosyl-(1-&gt;4)-beta-D-glucosyl-(1&lt;-&gt;1)-ceramide + UDP + H(+). The enzyme catalyses a neolactoside IV(3)-beta-GlcNAc-nLc4Cer + UDP-alpha-D-galactose = a neolactoside nLc6Cer + UDP + H(+). It functions in the pathway protein modification; protein glycosylation. Responsible for the synthesis of complex-type N-linked oligosaccharides in many glycoproteins as well as the carbohydrate moieties of glycolipids. This is Beta-1,4-galactosyltransferase 3 from Rattus norvegicus (Rat).